The chain runs to 123 residues: Large ribosomal subunit protein uL29 (123 aa).

The protein belongs to the universal ribosomal protein uL29 family. In terms of assembly, component of the large ribosomal subunit.

The protein localises to the cytoplasm. Functionally, component of the large ribosomal subunit. The ribosome is a large ribonucleoprotein complex responsible for the synthesis of proteins in the cell. This is Large ribosomal subunit protein uL29 (rpl35) from Xenopus tropicalis (Western clawed frog).